The following is a 20-amino-acid chain: Large ribosomal subunit protein bL33 (20 aa).

The protein belongs to the bacterial ribosomal protein bL33 family.

The polypeptide is Large ribosomal subunit protein bL33 (rpmG) (Brevundimonas vesicularis (Pseudomonas vesicularis)).